Here is a 413-residue protein sequence, read N- to C-terminus: Snake venom metalloproteinase AaPA (413 aa).

The signal sequence occupies residues 1–20 (MIQVLLVTICLAAFPYQGSS). The propeptide occupies 21–189 (IILESGKVND…KKASQLIVST (169 aa)). Residues 193–390 (RYMEIVIVVD…ENPPCILNKP (198 aa)) enclose the Peptidase M12B domain. Positions 196 and 280 each coordinate Ca(2+). 3 cysteine pairs are disulfide-bonded: Cys304/Cys385, Cys344/Cys369, and Cys346/Cys352. His329 is a binding site for Zn(2+). The active site involves Glu330. Positions 333 and 339 each coordinate Zn(2+). Ca(2+)-binding residues include Cys385, Asn388, Val400, Asn403, Leu405, Glu407, and Asp413. The propeptide occupies 391 to 413 (LRTDTVSTPVSGNELLEAEKDYD).

The protein belongs to the venom metalloproteinase (M12B) family. P-I subfamily. As to quaternary structure, monomer. The cofactor is Zn(2+). In terms of tissue distribution, expressed by the venom gland.

Its subcellular location is the secreted. In terms of biological role, snake venom zinc metalloprotease that may activate prothrombin. This Deinagkistrodon acutus (Hundred-pace snake) protein is Snake venom metalloproteinase AaPA.